The primary structure comprises 156 residues: Succinate dehydrogenase assembly factor 2-B, mitochondrial (156 aa).

Residues 1–24 (MLRQFIISRVGRRLQLPMITQSRL) constitute a mitochondrion transit peptide.

The protein belongs to the SDHAF2 family. In terms of assembly, interacts with the flavoprotein subunit within the SDH catalytic dimer.

Its subcellular location is the mitochondrion matrix. Plays an essential role in the assembly of succinate dehydrogenase (SDH), an enzyme complex (also referred to as respiratory complex II) that is a component of both the tricarboxylic acid (TCA) cycle and the mitochondrial electron transport chain, and which couples the oxidation of succinate to fumarate with the reduction of ubiquinone (coenzyme Q) to ubiquinol. Required for flavinylation (covalent attachment of FAD) of the flavoprotein subunit of the SDH catalytic dimer. The sequence is that of Succinate dehydrogenase assembly factor 2-B, mitochondrial from Drosophila sechellia (Fruit fly).